We begin with the raw amino-acid sequence, 322 residues long: Malate dehydrogenase (322 aa).

NAD(+) is bound by residues 10–15 (GSGMIG) and Asp34. The substrate site is built by Arg83 and Arg89. Residues Asn96 and 119-121 (ITN) contribute to the NAD(+) site. Substrate-binding residues include Asn121 and Arg152. His176 functions as the Proton acceptor in the catalytic mechanism.

Belongs to the LDH/MDH superfamily. MDH type 3 family.

The catalysed reaction is (S)-malate + NAD(+) = oxaloacetate + NADH + H(+). In terms of biological role, catalyzes the reversible oxidation of malate to oxaloacetate. The sequence is that of Malate dehydrogenase from Mesorhizobium japonicum (strain LMG 29417 / CECT 9101 / MAFF 303099) (Mesorhizobium loti (strain MAFF 303099)).